The following is a 677-amino-acid chain: Methionine--tRNA ligase (677 aa).

Residues 15–25 carry the 'HIGH' region motif; the sequence is PYANGPIHIGH. Cys-146, Cys-149, Cys-159, and Cys-162 together coordinate Zn(2+). Positions 332 to 336 match the 'KMSKS' region motif; the sequence is KMSKS. Residue Lys-335 participates in ATP binding. One can recognise a tRNA-binding domain in the interval 576-677; the sequence is DFAKVDLRVA…DGAKPGMRIM (102 aa).

This sequence belongs to the class-I aminoacyl-tRNA synthetase family. MetG type 1 subfamily. In terms of assembly, homodimer. The cofactor is Zn(2+).

It localises to the cytoplasm. It carries out the reaction tRNA(Met) + L-methionine + ATP = L-methionyl-tRNA(Met) + AMP + diphosphate. Functionally, is required not only for elongation of protein synthesis but also for the initiation of all mRNA translation through initiator tRNA(fMet) aminoacylation. The protein is Methionine--tRNA ligase of Idiomarina loihiensis (strain ATCC BAA-735 / DSM 15497 / L2-TR).